The primary structure comprises 360 residues: Inward rectifier potassium channel 13 (360 aa).

Over 1–50 the chain is Cytoplasmic; the sequence is MDGSHCKVIAPLLTERHQRMVTKDGHSTLQMDGAQTGLAYLRDAWGILMD. Residues 51 to 77 form a helical membrane-spanning segment; it reads MRWRWMMLVFSASFVIHWLVFAVLWYI. Residues 78-105 lie on the Extracellular side of the membrane; it reads LAEMNGDLGLDHDAPPENHTICVKYITS. The segment at residues 106 to 122 is an intramembrane region (helical; Pore-forming); the sequence is FTAAFSFSLETQLTIGY. The Selectivity filter motif lies at 119–124; the sequence is TIGYGT. Residues 123–131 lie on the Extracellular side of the membrane; that stretch reads GTMFPSGDC. The helical transmembrane segment at 132-157 threads the bilayer; sequence PSAIALLAIQMLLGLMLEAFITGAFV. Residues 158–360 are Cytoplasmic-facing; sequence AKIARPKNRA…FQISETGLTE (203 aa). Residue Ser287 is modified to Phosphoserine.

The protein belongs to the inward rectifier-type potassium channel (TC 1.A.2.1) family. In terms of assembly, homotetramer. Interacts with RAB28; the interaction may facilitate cone outer segments phagocytosis. Post-translationally, phosphorylation at Ser-287 by PKA increases them.

It localises to the membrane. The protein localises to the cell membrane. It carries out the reaction K(+)(in) = K(+)(out). Its activity is regulated as follows. Inhibited by Ba(2+) and Cs(+), although sensitivity to those inhibitors is much lower than in other Kir channels. Its function is as follows. Inward rectifier potassium channels are characterized by a greater tendency to allow potassium to flow into the cell rather than out of it. Their voltage dependence is regulated by the concentration of extracellular potassium; as external potassium is raised, the voltage range of the channel opening shifts to more positive voltages. The inward rectification is mainly due to the blockage of outward current by internal magnesium. KCNJ13 has a very low single channel conductance, low sensitivity to block by external barium and cesium, and no dependence of its inward rectification properties on the internal blocking particle magnesium. The sequence is that of Inward rectifier potassium channel 13 (KCNJ13) from Bos taurus (Bovine).